A 464-amino-acid polypeptide reads, in one-letter code: UDP-glycosyltransferase 76F2 (464 aa).

UDP-alpha-D-glucose-binding positions include Ser-279, 338–340, 355–363, and 377–380; these read VNQ, HCGWNSTIE, and FSDQ.

The protein belongs to the UDP-glycosyltransferase family.

This is UDP-glycosyltransferase 76F2 (UGT76F2) from Arabidopsis thaliana (Mouse-ear cress).